Consider the following 126-residue polypeptide: Glycine cleavage system H protein (126 aa).

The Lipoyl-binding domain occupies 22–104 (IAYVGITDYA…YGKGWLIKIK (83 aa)). The residue at position 63 (lysine 63) is an N6-lipoyllysine.

Belongs to the GcvH family. As to quaternary structure, the glycine cleavage system is composed of four proteins: P, T, L and H. (R)-lipoate serves as cofactor.

Functionally, the glycine cleavage system catalyzes the degradation of glycine. The H protein shuttles the methylamine group of glycine from the P protein to the T protein. The chain is Glycine cleavage system H protein from Phocaeicola vulgatus (strain ATCC 8482 / DSM 1447 / JCM 5826 / CCUG 4940 / NBRC 14291 / NCTC 11154) (Bacteroides vulgatus).